The primary structure comprises 486 residues: Ribulose bisphosphate carboxylase large chain (486 aa).

Residues N125 and T175 each contribute to the substrate site. K177 serves as the catalytic Proton acceptor. K179 lines the substrate pocket. Residues K203, D205, and E206 each contribute to the Mg(2+) site. At K203 the chain carries N6-carboxylysine. Residue H295 is the Proton acceptor of the active site. Substrate contacts are provided by R296, H328, and S380.

The protein belongs to the RuBisCO large chain family. Type I subfamily. Heterohexadecamer of 8 large chains and 8 small chains. It depends on Mg(2+) as a cofactor.

It catalyses the reaction 2 (2R)-3-phosphoglycerate + 2 H(+) = D-ribulose 1,5-bisphosphate + CO2 + H2O. The enzyme catalyses D-ribulose 1,5-bisphosphate + O2 = 2-phosphoglycolate + (2R)-3-phosphoglycerate + 2 H(+). Functionally, ruBisCO catalyzes two reactions: the carboxylation of D-ribulose 1,5-bisphosphate, the primary event in carbon dioxide fixation, as well as the oxidative fragmentation of the pentose substrate. Both reactions occur simultaneously and in competition at the same active site. This is Ribulose bisphosphate carboxylase large chain from Cereibacter sphaeroides (Rhodobacter sphaeroides).